Consider the following 343-residue polypeptide: uncharacterized protein (343 aa).

The interval 66–89 (TQNPEPTSASTPPSASASSLPNGA) is disordered. The span at 71–84 (PTSASTPPSASASS) shows a compositional bias: low complexity. A helical membrane pass occupies residues 96–116 (GVIAGPIVGVLGGLIVLVIIF). Disordered regions lie at residues 161–191 (GGYQ…NDTR) and 252–343 (GRPL…SEHF). Residues 165–188 (MHSTPWASSPRNSTIPQRSQSFYN) are compositionally biased toward polar residues. Basic and acidic residues predominate over residues 280–289 (SNDDSDETKL). Low complexity predominate over residues 290-299 (KQSSTESSSE). Composition is skewed to basic and acidic residues over residues 301-311 (LDEKDKFDKNS) and 322-333 (SSYEHEISEEHK). Positions 334-343 (KHSKKRSEHF) are enriched in basic residues.

It is found in the golgi apparatus membrane. This is an uncharacterized protein from Schizosaccharomyces pombe (strain 972 / ATCC 24843) (Fission yeast).